The following is a 192-amino-acid chain: Putative 3-methyladenine DNA glycosylase (192 aa).

This sequence belongs to the DNA glycosylase MPG family.

The protein is Putative 3-methyladenine DNA glycosylase of Methanoculleus marisnigri (strain ATCC 35101 / DSM 1498 / JR1).